Consider the following 245-residue polypeptide: Pyridoxine 5'-phosphate synthase (245 aa).

Residue Asn-7 participates in 3-amino-2-oxopropyl phosphate binding. 9–10 (DH) lines the 1-deoxy-D-xylulose 5-phosphate pocket. Arg-18 lines the 3-amino-2-oxopropyl phosphate pocket. Residue His-43 is the Proton acceptor of the active site. 1-deoxy-D-xylulose 5-phosphate is bound by residues Arg-45 and His-50. The Proton acceptor role is filled by Glu-70. Thr-100 contributes to the 1-deoxy-D-xylulose 5-phosphate binding site. His-190 serves as the catalytic Proton donor. 3-amino-2-oxopropyl phosphate is bound by residues Gly-191 and 212–213 (GH).

The protein belongs to the PNP synthase family. Homooctamer; tetramer of dimers.

The protein localises to the cytoplasm. It catalyses the reaction 3-amino-2-oxopropyl phosphate + 1-deoxy-D-xylulose 5-phosphate = pyridoxine 5'-phosphate + phosphate + 2 H2O + H(+). The protein operates within cofactor biosynthesis; pyridoxine 5'-phosphate biosynthesis; pyridoxine 5'-phosphate from D-erythrose 4-phosphate: step 5/5. Its function is as follows. Catalyzes the complicated ring closure reaction between the two acyclic compounds 1-deoxy-D-xylulose-5-phosphate (DXP) and 3-amino-2-oxopropyl phosphate (1-amino-acetone-3-phosphate or AAP) to form pyridoxine 5'-phosphate (PNP) and inorganic phosphate. The polypeptide is Pyridoxine 5'-phosphate synthase (Prochlorococcus marinus (strain MIT 9313)).